The sequence spans 107 residues: Putative antitoxin VapB5 (107 aa).

The next 2 helical transmembrane spans lie at 3-23 and 65-85; these read GPVIIPLISTLGLSFLAILLA and LIILTPALTWSLTALSMAYLY.

The protein localises to the cell membrane. Functionally, possibly the antitoxin component of a type II toxin-antitoxin (TA) system. Its cognate toxin is VapC5 (Potential). This is Putative antitoxin VapB5 (vapB5) from Methanocaldococcus jannaschii (strain ATCC 43067 / DSM 2661 / JAL-1 / JCM 10045 / NBRC 100440) (Methanococcus jannaschii).